We begin with the raw amino-acid sequence, 203 residues long: ATP-dependent Clp protease proteolytic subunit (203 aa).

The Nucleophile role is filled by S107. The active site involves H132.

The protein belongs to the peptidase S14 family. Fourteen ClpP subunits assemble into 2 heptameric rings which stack back to back to give a disk-like structure with a central cavity, resembling the structure of eukaryotic proteasomes.

Its subcellular location is the cytoplasm. It carries out the reaction Hydrolysis of proteins to small peptides in the presence of ATP and magnesium. alpha-casein is the usual test substrate. In the absence of ATP, only oligopeptides shorter than five residues are hydrolyzed (such as succinyl-Leu-Tyr-|-NHMec, and Leu-Tyr-Leu-|-Tyr-Trp, in which cleavage of the -Tyr-|-Leu- and -Tyr-|-Trp bonds also occurs).. Its function is as follows. Cleaves peptides in various proteins in a process that requires ATP hydrolysis. Has a chymotrypsin-like activity. Plays a major role in the degradation of misfolded proteins. The protein is ATP-dependent Clp protease proteolytic subunit of Shewanella woodyi (strain ATCC 51908 / MS32).